The chain runs to 236 residues: Small ribosomal subunit protein eS6 (236 aa).

2 positions are modified to phosphoserine: S232 and S233.

This sequence belongs to the eukaryotic ribosomal protein eS6 family. Post-translationally, phosphorylated.

The sequence is that of Small ribosomal subunit protein eS6 (RPS6) from Debaryomyces hansenii (strain ATCC 36239 / CBS 767 / BCRC 21394 / JCM 1990 / NBRC 0083 / IGC 2968) (Yeast).